The following is a 364-amino-acid chain: Methylthioribose-1-phosphate isomerase (364 aa).

The Proton donor role is filled by Asp254.

Belongs to the eIF-2B alpha/beta/delta subunits family. MtnA subfamily.

It localises to the cytoplasm. The protein localises to the nucleus. It catalyses the reaction 5-(methylsulfanyl)-alpha-D-ribose 1-phosphate = 5-(methylsulfanyl)-D-ribulose 1-phosphate. It participates in amino-acid biosynthesis; L-methionine biosynthesis via salvage pathway; L-methionine from S-methyl-5-thio-alpha-D-ribose 1-phosphate: step 1/6. In terms of biological role, catalyzes the interconversion of methylthioribose-1-phosphate (MTR-1-P) into methylthioribulose-1-phosphate (MTRu-1-P). The polypeptide is Methylthioribose-1-phosphate isomerase (Drosophila erecta (Fruit fly)).